The following is a 138-amino-acid chain: uncharacterized protein (138 aa).

Residues Met1–Asp73 form a disordered region. Positions Leu7–Gly18 are enriched in gly residues. Residues Gly19–Ala29 show a composition bias toward basic and acidic residues. Residues Glu30–Ser43 are compositionally biased toward low complexity. A helical transmembrane segment spans residues Val106–Val126.

Belongs to the FAM241 family.

It localises to the membrane. This is an uncharacterized protein from Bos taurus (Bovine).